Consider the following 254-residue polypeptide: Nickel import ATP-binding protein NikD (254 aa).

Residues 2–241 (PQQIELRNIT…PKHTVTRSLV (240 aa)) enclose the ABC transporter domain. 36 to 43 (GGSGSGKS) provides a ligand contact to ATP.

This sequence belongs to the ABC transporter superfamily. Nickel importer (TC 3.A.1.5.3) family. In terms of assembly, the complex is composed of two ATP-binding proteins (NikD and NikE), two transmembrane proteins (NikB and NikC) and a solute-binding protein (NikA).

It is found in the cell inner membrane. The enzyme catalyses Ni(2+)(out) + ATP + H2O = Ni(2+)(in) + ADP + phosphate + H(+). Its function is as follows. Part of the ABC transporter complex NikABCDE involved in nickel import. Responsible for energy coupling to the transport system. The protein is Nickel import ATP-binding protein NikD of Shigella flexneri.